We begin with the raw amino-acid sequence, 155 residues long: Putative pre-16S rRNA nuclease (155 aa).

This sequence belongs to the YqgF nuclease family.

Its subcellular location is the cytoplasm. Its function is as follows. Could be a nuclease involved in processing of the 5'-end of pre-16S rRNA. In Novosphingobium aromaticivorans (strain ATCC 700278 / DSM 12444 / CCUG 56034 / CIP 105152 / NBRC 16084 / F199), this protein is Putative pre-16S rRNA nuclease.